Reading from the N-terminus, the 386-residue chain is Vacuolar protein-sorting-associated protein 36 (386 aa).

A GLUE N-terminal domain is found at 1–88; sequence MDRFVWTSGL…SAKIVVHLHP (88 aa). The GLUE C-terminal domain maps to 105–138; the sequence is YIKLSFKEHGQIEFYRRLSEEMTQRRWETVPVSQ. The stretch at 160 to 185 forms a coiled coil; sequence ERKLEEKRKETDKNISEAFEDLSKLM.

The protein belongs to the VPS36 family. Component of a complex at least composed of ELL, SNF8/EAP30, VPS25/EAP20 and VPS36/EAP45. Component of the endosomal sorting complex required for transport II (ESCRT-II), composed of SNF8, VPS36 and two copies of VPS25. Interacts with VPS25, SNF8, TSG101 and CHMP6. Interacts (via GLUE domain) with ubiquitin. Interacts with RILPL1 (via the C-terminal domain); which recruits ESCRT-II to the endosome membranes. Interacts with ECPAS.

The protein localises to the cytoplasm. The protein resides in the endosome. Its subcellular location is the late endosome. It is found in the membrane. It localises to the nucleus. In terms of biological role, component of the ESCRT-II complex (endosomal sorting complex required for transport II), which is required for multivesicular body (MVB) formation and sorting of endosomal cargo proteins into MVBs. The MVB pathway mediates delivery of transmembrane proteins into the lumen of the lysosome for degradation. The ESCRT-II complex is probably involved in the recruitment of the ESCRT-III complex. Its ability to bind ubiquitin probably plays a role in endosomal sorting of ubiquitinated cargo proteins by ESCRT complexes. The ESCRT-II complex may also play a role in transcription regulation, possibly via its interaction with ELL. Binds phosphoinosides such as PtdIns(3,4,5)P3. This is Vacuolar protein-sorting-associated protein 36 (Vps36) from Rattus norvegicus (Rat).